A 78-amino-acid chain; its full sequence is Large ribosomal subunit protein bL28 (78 aa).

A disordered region spans residues 1–24 (MSKVCQVTGKRPASGNNVSHAHNK).

It belongs to the bacterial ribosomal protein bL28 family.

The polypeptide is Large ribosomal subunit protein bL28 (Nitrosococcus oceani (strain ATCC 19707 / BCRC 17464 / JCM 30415 / NCIMB 11848 / C-107)).